The following is a 657-amino-acid chain: THO complex subunit 1 (657 aa).

At Met-1 the chain carries N-acetylmethionine. Position 2 is a phosphoserine (Ser-2). Position 4 is a phosphothreonine (Thr-4). Residue Lys-31 forms a Glycyl lysine isopeptide (Lys-Gly) (interchain with G-Cter in SUMO2) linkage. Lys-133 carries the post-translational modification N6-acetyllysine. The interval 133 to 167 is dock domain; interaction with THOC2; that stretch reads KNYLLRMCNDLLRRLSKSQNTVFCGRIQLFLARLF. A disordered region spans residues 194-222; sequence QESTLGQKHTEDREEGMDVEEGEMGDEEA. Over residues 206–222 the composition is skewed to acidic residues; sequence REEGMDVEEGEMGDEEA. The segment at 227–397 is dock domain; interaction with THOC2; that stretch reads SIPIDYNLYR…WNSWKNEGCP (171 aa). Residue Lys-300 is modified to N6-acetyllysine. A Glycyl lysine isopeptide (Lys-Gly) (interchain with G-Cter in SUMO2) cross-link involves residue Lys-408. Positions 414–430 match the Nuclear localization signal motif; sequence RKRTAPEDFLGKGPTKK. The tract at residues 533-569 is disordered; that stretch reads LPPPSEEIKTGEDEDEEDNDALLKENESPDVRRDKPV. At Ser-537 the chain carries Phosphoserine. Thr-542 carries the phosphothreonine modification. Basic and acidic residues predominate over residues 553 to 569; the sequence is ALLKENESPDVRRDKPV. The residue at position 560 (Ser-560) is a Phosphoserine. The region spanning 570–653 is the Death domain; sequence TGEQIEVFAN…DLAESLTNDN (84 aa). Lys-580 participates in a covalent cross-link: Glycyl lysine isopeptide (Lys-Gly) (interchain with G-Cter in SUMO2). Lys-595 is covalently cross-linked (Glycyl lysine isopeptide (Lys-Gly) (interchain with G-Cter in SUMO1); alternate). Residue Lys-595 forms a Glycyl lysine isopeptide (Lys-Gly) (interchain with G-Cter in SUMO2); alternate linkage.

This sequence belongs to the THOC1 family. As to quaternary structure, component of the THO subcomplex, which is composed of THOC1, THOC2, THOC3, THOC5, THOC6 and THOC7. The THO subcomplex interacts with DDX39B to form the THO-DDX39B complex which multimerizes into a 28-subunit tetrameric assembly. Component of the transcription/export (TREX) complex at least composed of ALYREF/THOC4, DDX39B, SARNP/CIP29, CHTOP and the THO subcomplex; in the complex interacts with THOC2, THOC5 and THOC7. TREX seems to have a dynamic structure involving ATP-dependent remodeling. Binds to the hypophosphorylated form of RB1. Interacts with RNA polymerase II. Interacts with LUZP4. Expression is altered specifically during apoptosis and is accompanied by the appearance of novel forms with smaller apparent molecular mass. Post-translationally, polyubiquitinated, leading to proteasomal degradation; probably involves NEDD4. Ubiquitous. Expressed in various cancer cell lines. Expressed at very low levels in normal breast epithelial cells and highly expressed in breast tumors. Expression is strongly associated with an aggressive phenotype of breast tumors and expression correlates with tumor size and the metastatic state of the tumor progression.

The protein resides in the nucleus speckle. It localises to the nucleus. The protein localises to the nucleoplasm. It is found in the nucleus matrix. Its subcellular location is the cytoplasm. Functionally, component of the THO subcomplex of the TREX complex which is thought to couple mRNA transcription, processing and nuclear export, and which specifically associates with spliced mRNA and not with unspliced pre-mRNA. Required for efficient export of polyadenylated RNA. The THOC1-THOC2-THOC3 core complex alone is sufficient to bind export factor NXF1-NXT1 and promote ATPase activity of DDX39B/UAP56. TREX is recruited to spliced mRNAs by a transcription-independent mechanism, binds to mRNA upstream of the exon-junction complex (EJC) and is recruited in a splicing- and cap-dependent manner to a region near the 5' end of the mRNA where it functions in mRNA export to the cytoplasm via the TAP/NXF1 pathway. Regulates transcriptional elongation of a subset of genes. Involved in genome stability by preventing co-transcriptional R-loop formation. May play a role in hair cell formation, hence may be involved in hearing. Its function is as follows. Participates in an apoptotic pathway which is characterized by activation of caspase-6, increases in the expression of BAK1 and BCL2L1 and activation of NF-kappa-B. This pathway does not require p53/TP53, nor does the presence of p53/TP53 affect the efficiency of cell killing. Activates a G2/M cell cycle checkpoint prior to the onset of apoptosis. Apoptosis is inhibited by association with RB1. In terms of biological role, (Microbial infection) The TREX complex is essential for the export of Kaposi's sarcoma-associated herpesvirus (KSHV) intronless mRNAs and infectious virus production. This chain is THO complex subunit 1 (THOC1), found in Homo sapiens (Human).